We begin with the raw amino-acid sequence, 255 residues long: tRNA (guanine-N(1)-)-methyltransferase (255 aa).

S-adenosyl-L-methionine is bound by residues Gly-117 and 137–142 (LGDFVL).

Belongs to the RNA methyltransferase TrmD family. Homodimer.

It is found in the cytoplasm. It catalyses the reaction guanosine(37) in tRNA + S-adenosyl-L-methionine = N(1)-methylguanosine(37) in tRNA + S-adenosyl-L-homocysteine + H(+). Functionally, specifically methylates guanosine-37 in various tRNAs. This chain is tRNA (guanine-N(1)-)-methyltransferase, found in Paraburkholderia xenovorans (strain LB400).